We begin with the raw amino-acid sequence, 135 residues long: Large ribosomal subunit protein uL18 (135 aa).

The disordered stretch occupies residues 1–23 (MAQTQADTAARKPVGQSVSATRR).

It belongs to the universal ribosomal protein uL18 family. As to quaternary structure, part of the 50S ribosomal subunit; part of the 5S rRNA/L5/L18/L25 subcomplex. Contacts the 5S and 23S rRNAs.

In terms of biological role, this is one of the proteins that bind and probably mediate the attachment of the 5S RNA into the large ribosomal subunit, where it forms part of the central protuberance. The chain is Large ribosomal subunit protein uL18 from Mycobacterium marinum (strain ATCC BAA-535 / M).